A 573-amino-acid polypeptide reads, in one-letter code: 60 kDa lysophospholipase (573 aa).

The Asparaginase/glutaminase domain maps to Arg9–Asp355. Thr19 serves as the catalytic Acyl-ester intermediate. The tract at residues Thr41–Glu350 is asparaginase. Substrate-binding positions include Asp84 to Ser86 and Thr116 to Asp117. 5 ANK repeats span residues Gly141–Pro170, Ala399–Leu429, Asn433–Thr462, Asp466–Thr495, and Asp533–Ala562.

In the N-terminal section; belongs to the asparaginase 1 family. In terms of assembly, monomer.

The catalysed reaction is a 1-acyl-sn-glycero-3-phosphocholine + H2O = sn-glycerol 3-phosphocholine + a fatty acid + H(+). It carries out the reaction L-asparagine + H2O = L-aspartate + NH4(+). It catalyses the reaction a 1-O-alkyl-2-acetyl-sn-glycero-3-phosphocholine + H2O = a 1-O-alkyl-sn-glycero-3-phosphocholine + acetate + H(+). The enzyme catalyses 1-hexadecanoyl-sn-glycero-3-phosphocholine + H2O = sn-glycerol 3-phosphocholine + hexadecanoate + H(+). The catalysed reaction is 2 1-hexadecanoyl-sn-glycero-3-phosphocholine = 1,2-dihexadecanoyl-sn-glycero-3-phosphocholine + sn-glycerol 3-phosphocholine. It carries out the reaction 1-octadecanoyl-sn-glycero-3-phosphocholine + H2O = octadecanoate + sn-glycerol 3-phosphocholine + H(+). It catalyses the reaction 1-(9Z-octadecenoyl)-sn-glycero-3-phosphocholine + H2O = sn-glycerol 3-phosphocholine + (9Z)-octadecenoate + H(+). The enzyme catalyses 1-hexadecanoyl-sn-glycero-3-phosphoethanolamine + H2O = sn-glycero-3-phosphoethanolamine + hexadecanoate + H(+). The catalysed reaction is 1-(9Z-octadecenoyl)-sn-glycero-3-phosphoethanolamine + H2O = sn-glycero-3-phosphoethanolamine + (9Z)-octadecenoate + H(+). It carries out the reaction 1-hexadecanoyl-sn-glycero-3-phosphoethanolamine + 1-hexadecanoyl-sn-glycero-3-phosphocholine = 1,2-dihexadecanoyl-sn-glycero-3-phosphoethanolamine + sn-glycerol 3-phosphocholine. It catalyses the reaction 2-(5Z,8Z,11Z,14Z)-eicosatetraenoyl-sn-glycero-3-phosphocholine + H2O = sn-glycerol 3-phosphocholine + (5Z,8Z,11Z,14Z)-eicosatetraenoate + H(+). The enzyme catalyses 2-hexadecanoyl-sn-glycero-3-phosphocholine + H2O = sn-glycerol 3-phosphocholine + hexadecanoate + H(+). The catalysed reaction is 2 2-hexadecanoyl-sn-glycero-3-phosphocholine = 1,2-dihexadecanoyl-sn-glycero-3-phosphocholine + sn-glycerol 3-phosphocholine. It carries out the reaction 1-O-(9Z)-octadecenoyl-2-O-acetyl-sn-glycero-3-phosphocholine + H2O = 2-acetyl-sn-glycero-3-phosphocholine + (9Z)-octadecenoate + H(+). It catalyses the reaction a 1-acyl-sn-glycero-3-phospho-(1D-myo-inositol) + 1-hexadecanoyl-sn-glycero-3-phosphocholine = a 1-acyl-2-hexadecanoyl-sn-glycero-3-phospho-(1D-myo-inositol) + sn-glycerol 3-phosphocholine. The enzyme catalyses 2 2-(5Z,8Z,11Z,14Z)-eicosatetraenoyl-sn-glycero-3-phosphocholine = 1,2-di-(5Z,8Z,11Z,14Z-eicosatetraenoyl)-sn-glycero-3-phosphocholine + sn-glycerol 3-phosphocholine. Exhibits lysophospholipase, transacylase, PAF acetylhydrolase and asparaginase activities. Can catalyze three types of transacylation reactions: (1) acyl transfer from 1-acyl-sn-glycero-3-phosphocholine (1-acyl-GPC) to the sn-1(3) positions of glycerol and 2-acylglycerol (sn-1 to -1(3) transfer), (2) acyl transfer from 1-acyl-GPC to the sn-2 positions of 1-acyl-GPC, 1-acyl-sn-glycero-3-phosphoethanolamine (1-acyl-GPE), and other lysophospholipids (sn-1 to -2 transfer) and (3) acyl transfer from 2-acyl-GPC to the sn-1 position of 2-acyl-GPC and 2-acyl-GPE (sn-2 to -1 transfer). Mediates the synthesis of 1-arachidonoyl species of phospholipids by transferring the arachidonoyl residue from 2-arachidonoyl lysophospholipid to the sn-1 position of 2-acyl lysophospholipid. This chain is 60 kDa lysophospholipase (ASPG), found in Homo sapiens (Human).